The primary structure comprises 311 residues: Ribosomal protein L11 methyltransferase (311 aa).

4 residues coordinate S-adenosyl-L-methionine: Thr-162, Gly-183, Asp-205, and Asn-248.

The protein belongs to the methyltransferase superfamily. PrmA family.

The protein resides in the cytoplasm. The enzyme catalyses L-lysyl-[protein] + 3 S-adenosyl-L-methionine = N(6),N(6),N(6)-trimethyl-L-lysyl-[protein] + 3 S-adenosyl-L-homocysteine + 3 H(+). Methylates ribosomal protein L11. This Bacillus licheniformis (strain ATCC 14580 / DSM 13 / JCM 2505 / CCUG 7422 / NBRC 12200 / NCIMB 9375 / NCTC 10341 / NRRL NRS-1264 / Gibson 46) protein is Ribosomal protein L11 methyltransferase.